The following is a 1288-amino-acid chain: (E3-independent) E2 ubiquitin-conjugating enzyme UBE2O (1288 aa).

2 stretches are compositionally biased toward low complexity: residues M1–A26 and A34–P47. Disordered regions lie at residues M1–S51 and E80–A109. Residues S45, S82, S84, and S394 each carry the phosphoserine modification. 2 disordered regions span residues T396 to V529 and E711 to V743. The segment covering C401 to A418 has biased composition (basic and acidic residues). S436 is modified (phosphoserine). Acidic residues predominate over residues M440–E450. Residues E462–E472 show a composition bias toward basic and acidic residues. Over residues Q473–D485 the composition is skewed to acidic residues. Residues T483 and T486 each carry the phosphothreonine modification. Positions T486 to G502 are enriched in low complexity. Position 510 is a phosphoserine (S510). The span at N517–K528 shows a compositional bias: basic residues. Positions V717–S726 are enriched in low complexity. Residues D727–E737 show a composition bias toward acidic residues. A coiled-coil region spans residues R809–V879. S833 is subject to Phosphoserine. The residue at position 835 (T835) is a Phosphothreonine. S836 is subject to Phosphoserine. The segment covering E872–E890 has biased composition (basic and acidic residues). The tract at residues E872–W899 is disordered. At S893 the chain carries Phosphoserine. Residues K950 to T1110 form the UBC core domain. C1037 acts as the Glycyl thioester intermediate in catalysis. The interval G1158–Y1247 is disordered.

The protein belongs to the ubiquitin-conjugating enzyme family. Interacts with CPNE1 (via VWFA domain) and CPNE4 (via VWFA domain). Interacts with UBR2. Phosphorylated. Phosphorylation affects subcellular location. In terms of processing, ubiquitinated: autoubiquitinates, possibly affecting its subcellular location. As to expression, highly expressed in reticulocytes.

It is found in the cytoplasm. The protein localises to the nucleus. It carries out the reaction S-ubiquitinyl-[E1 ubiquitin-activating enzyme]-L-cysteine + [acceptor protein]-L-lysine = [E1 ubiquitin-activating enzyme]-L-cysteine + N(6)-monoubiquitinyl-[acceptor protein]-L-lysine.. Its pathway is protein modification; protein ubiquitination. Inhibited by inorganic arsenite such as phenylarsenoxides. Its function is as follows. E2/E3 hybrid ubiquitin-protein ligase that displays both E2 and E3 ligase activities and mediates monoubiquitination of target proteins. Negatively regulates TRAF6-mediated NF-kappa-B activation independently of its E2 activity. Acts as a positive regulator of BMP7 signaling by mediating monoubiquitination of SMAD6, thereby regulating adipogenesis. Mediates monoubiquitination at different sites of the nuclear localization signal (NLS) of BAP1, leading to cytoplasmic retention of BAP1. Also able to monoubiquitinate the NLS of other chromatin-associated proteins, such as INO80 and CXXC1, affecting their subcellular location. Acts as a regulator of retrograde transport by assisting the TRIM27:MAGEL2 E3 ubiquitin ligase complex to mediate 'Lys-63'-linked ubiquitination of WASHC1, leading to promote endosomal F-actin assembly. This is (E3-independent) E2 ubiquitin-conjugating enzyme UBE2O (Ube2o) from Mus musculus (Mouse).